The primary structure comprises 316 residues: 4-diphosphocytidyl-2-C-methyl-D-erythritol kinase (316 aa).

Lysine 32 is an active-site residue. 126–136 contacts ATP; it reads PVGAGLGGGSA. The active site involves aspartate 168.

This sequence belongs to the GHMP kinase family. IspE subfamily.

It catalyses the reaction 4-CDP-2-C-methyl-D-erythritol + ATP = 4-CDP-2-C-methyl-D-erythritol 2-phosphate + ADP + H(+). It participates in isoprenoid biosynthesis; isopentenyl diphosphate biosynthesis via DXP pathway; isopentenyl diphosphate from 1-deoxy-D-xylulose 5-phosphate: step 3/6. Functionally, catalyzes the phosphorylation of the position 2 hydroxy group of 4-diphosphocytidyl-2C-methyl-D-erythritol. This is 4-diphosphocytidyl-2-C-methyl-D-erythritol kinase from Bifidobacterium longum (strain NCC 2705).